The primary structure comprises 368 residues: MNKTITALAIIMASFAANASVLPETPVPFKSGTGAIDNDTVYIGLGSAGTAWYKLDTQAKDKKWTALAAFPGGPRDQATSAFIDGNLYVFGGIGKNSEGLTQVFNDVHKYNPKTNSWVKLMSHAPMGMAGHVTFVHNGKAYVTGGVNQNIFNGYFEDLNEAGKDSTAVDKINAYYFDKKAEDYFFNKFLLSFDPSTQQWSYAGESPWYGTAGAAVVNKGDKTWLINGEAKPGLRTDAVFELDFTGNNLKWNKLAPVSSPDGVAGGFAGISNDSLIFAGGAGFKGSRENYQNGKNYAHEGLKKSYSTDIHLWHNGKWDKSGELSQGRAYGVSLPWNNSLLIIGGETAGGKAVTDSVFISVKDNKVTVQN.

Residues 1 to 19 (MNKTITALAIIMASFAANA) form the signal peptide. Kelch repeat units follow at residues 40-84 (TVYI…AFID), 86-137 (NLYV…FVHN), 139-173 (KAYV…KINA), 174-219 (YYFD…VNKG), 222-265 (TWLI…VAGG), 287-336 (ENYQ…PWNN), and 338-367 (LLII…VTVQ). Residue Glu-228 is the Proton acceptor of the active site.

Belongs to the NanM family. Homodimer.

Its subcellular location is the periplasm. The enzyme catalyses N-acetyl-alpha-neuraminate = N-acetyl-beta-neuraminate. In terms of biological role, converts alpha-N-acetylneuranimic acid (Neu5Ac) to the beta-anomer, accelerating the equilibrium between the alpha- and beta-anomers. Probably facilitates sialidase-negative bacteria to compete successfully for limited amounts of extracellular Neu5Ac, which is likely taken up in the beta-anomer. In addition, the rapid removal of sialic acid from solution might be advantageous to the bacterium to damp down host responses. This chain is N-acetylneuraminate epimerase, found in Escherichia coli O139:H28 (strain E24377A / ETEC).